We begin with the raw amino-acid sequence, 134 residues long: UPF0102 protein SYNW1051 (134 aa).

This sequence belongs to the UPF0102 family.

The polypeptide is UPF0102 protein SYNW1051 (Parasynechococcus marenigrum (strain WH8102)).